The sequence spans 247 residues: Programmed cell death 1 ligand 2 (247 aa).

Residues 1–19 form the signal peptide; the sequence is MLLLLPILNLSLQLHPVAA. The Extracellular portion of the chain corresponds to 20 to 221; that stretch reads LFTVTAPKEV…RMEPKVPRTW (202 aa). The Ig-like V-type domain maps to 21–118; the sequence is FTVTAPKEVY…AWDYKYLTVK (98 aa). Intrachain disulfides connect Cys-42-Cys-102 and Cys-143-Cys-192. 4 N-linked (GlcNAc...) asparagine glycosylation sites follow: Asn-64, Asn-157, Asn-163, and Asn-189. The Ig-like C2-type domain occupies 122–203; the sequence is SYMRIDTRIL…FWNAHMKELT (82 aa). The chain crosses the membrane as a helical span at residues 222–242; sequence PLHVFIPACTIALIFLAIVII. Residues 243-247 lie on the Cytoplasmic side of the membrane; sequence QRKRI.

Belongs to the immunoglobulin superfamily. BTN/MOG family. Interacts with PDCD1. Expressed in immature and mature bone marrow-derived dendritic cells and splenic dendritic cells. Highly expressed in placenta, liver and weakly expressed in heart, spleen, lymph nodes and thymus. Also expressed in some tumor cell lines of lymphoid origin.

The protein resides in the cell membrane. Its function is as follows. Involved in the costimulatory signal essential for T-cell proliferation and IFNG production in a PDCD1-independent manner. Interaction with PDCD1 inhibits T-cell proliferation by blocking cell cycle progression and cytokine production. This Mus musculus (Mouse) protein is Programmed cell death 1 ligand 2 (Pdcd1lg2).